A 208-amino-acid polypeptide reads, in one-letter code: Large ribosomal subunit protein uL4 (208 aa).

The segment at 58–77 (RGGGRKPWRQKGTGRARQGS) is disordered. The span at 60-71 (GGRKPWRQKGTG) shows a compositional bias: basic residues.

The protein belongs to the universal ribosomal protein uL4 family. Part of the 50S ribosomal subunit.

Functionally, one of the primary rRNA binding proteins, this protein initially binds near the 5'-end of the 23S rRNA. It is important during the early stages of 50S assembly. It makes multiple contacts with different domains of the 23S rRNA in the assembled 50S subunit and ribosome. In terms of biological role, forms part of the polypeptide exit tunnel. This Caldicellulosiruptor saccharolyticus (strain ATCC 43494 / DSM 8903 / Tp8T 6331) protein is Large ribosomal subunit protein uL4.